A 132-amino-acid polypeptide reads, in one-letter code: Small ribosomal subunit protein uS8 (132 aa).

Belongs to the universal ribosomal protein uS8 family. In terms of assembly, part of the 30S ribosomal subunit. Contacts proteins S5 and S12.

Its function is as follows. One of the primary rRNA binding proteins, it binds directly to 16S rRNA central domain where it helps coordinate assembly of the platform of the 30S subunit. The polypeptide is Small ribosomal subunit protein uS8 (Corynebacterium diphtheriae (strain ATCC 700971 / NCTC 13129 / Biotype gravis)).